The primary structure comprises 86 residues: MTMQGNKLVNLGFGNFVVASRVVSIVDPDSSPMRRLREDARDQGRLIDVTQGRKTRSIIITDSNHVILSAIQTETMGQRFTQEDED.

This sequence belongs to the RemA family.

This Nitratidesulfovibrio vulgaris (strain DP4) (Desulfovibrio vulgaris) protein is Putative regulatory protein Dvul_2085.